Reading from the N-terminus, the 85-residue chain is Dr hemagglutinin AFA-III operon regulatory protein AfaF (85 aa).

This sequence to E.coli PapI and DaaF.

May have a possible regulatory function on the expression of the other AFA-III genes. In Escherichia coli, this protein is Dr hemagglutinin AFA-III operon regulatory protein AfaF (afaF).